The following is a 96-amino-acid chain: Co-chaperonin GroES (96 aa).

The protein belongs to the GroES chaperonin family. In terms of assembly, heptamer of 7 subunits arranged in a ring. Interacts with the chaperonin GroEL.

It is found in the cytoplasm. Functionally, together with the chaperonin GroEL, plays an essential role in assisting protein folding. The GroEL-GroES system forms a nano-cage that allows encapsulation of the non-native substrate proteins and provides a physical environment optimized to promote and accelerate protein folding. GroES binds to the apical surface of the GroEL ring, thereby capping the opening of the GroEL channel. This is Co-chaperonin GroES from Shewanella frigidimarina (strain NCIMB 400).